The sequence spans 298 residues: Probable tRNA(His) guanylyltransferase (298 aa).

Mg(2+) is bound by residues D58, G59, and D105. GTP-binding positions include 58–63 (DGRNFH) and 104–105 (SD).

Belongs to the tRNA(His) guanylyltransferase family. As to quaternary structure, homotetramer. Interacts with MFN1 and MFN2; functions as a guanyl-nucleotide exchange factor/GEF for MFN2 and also probably MFN1. Requires Mg(2+) as cofactor. In terms of tissue distribution, expressed in many tissues.

It is found in the cytoplasm. It localises to the mitochondrion outer membrane. The catalysed reaction is a 5'-end ribonucleotide-tRNA(His) + GTP + ATP + H2O = a 5'-end phospho-guanosine-ribonucleotide-tRNA(His) + AMP + 2 diphosphate + H(+). In terms of biological role, adds a GMP to the 5'-end of tRNA(His) after transcription and RNase P cleavage. This step is essential for proper recognition of the tRNA and for the fidelity of protein synthesis. Also functions as a guanyl-nucleotide exchange factor/GEF for the MFN1 and MFN2 mitofusins thereby regulating mitochondrial fusion. By regulating both mitochondrial dynamics and bioenergetic function, it contributes to cell survival following oxidative stress. The polypeptide is Probable tRNA(His) guanylyltransferase (THG1L) (Homo sapiens (Human)).